The chain runs to 257 residues: 1-(5-phosphoribosyl)-5-[(5-phosphoribosylamino)methylideneamino] imidazole-4-carboxamide isomerase (257 aa).

Asp-8 serves as the catalytic Proton acceptor. Catalysis depends on Asp-129, which acts as the Proton donor.

It belongs to the HisA/HisF family.

It localises to the cytoplasm. It catalyses the reaction 1-(5-phospho-beta-D-ribosyl)-5-[(5-phospho-beta-D-ribosylamino)methylideneamino]imidazole-4-carboxamide = 5-[(5-phospho-1-deoxy-D-ribulos-1-ylimino)methylamino]-1-(5-phospho-beta-D-ribosyl)imidazole-4-carboxamide. It participates in amino-acid biosynthesis; L-histidine biosynthesis; L-histidine from 5-phospho-alpha-D-ribose 1-diphosphate: step 4/9. The chain is 1-(5-phosphoribosyl)-5-[(5-phosphoribosylamino)methylideneamino] imidazole-4-carboxamide isomerase from Thermosynechococcus vestitus (strain NIES-2133 / IAM M-273 / BP-1).